The primary structure comprises 255 residues: Hydroxyacylglutathione hydrolase (255 aa).

Residues His56, His58, Asp60, His61, His114, Asp133, and His171 each contribute to the Zn(2+) site.

The protein belongs to the metallo-beta-lactamase superfamily. Glyoxalase II family. Monomer. Zn(2+) serves as cofactor.

It carries out the reaction an S-(2-hydroxyacyl)glutathione + H2O = a 2-hydroxy carboxylate + glutathione + H(+). It participates in secondary metabolite metabolism; methylglyoxal degradation; (R)-lactate from methylglyoxal: step 2/2. Functionally, thiolesterase that catalyzes the hydrolysis of S-D-lactoyl-glutathione to form glutathione and D-lactic acid. The protein is Hydroxyacylglutathione hydrolase of Cereibacter sphaeroides (strain ATCC 17025 / ATH 2.4.3) (Rhodobacter sphaeroides).